We begin with the raw amino-acid sequence, 376 residues long: Chorismate synthase (376 aa).

Residues R39 and R45 each coordinate NADP(+). FMN is bound by residues 115–117 (RSS), G276, 291–295 (KPIPT), and R317.

It belongs to the chorismate synthase family. In terms of assembly, homotetramer. FMNH2 serves as cofactor.

The catalysed reaction is 5-O-(1-carboxyvinyl)-3-phosphoshikimate = chorismate + phosphate. Its pathway is metabolic intermediate biosynthesis; chorismate biosynthesis; chorismate from D-erythrose 4-phosphate and phosphoenolpyruvate: step 7/7. In terms of biological role, catalyzes the anti-1,4-elimination of the C-3 phosphate and the C-6 proR hydrogen from 5-enolpyruvylshikimate-3-phosphate (EPSP) to yield chorismate, which is the branch point compound that serves as the starting substrate for the three terminal pathways of aromatic amino acid biosynthesis. This reaction introduces a second double bond into the aromatic ring system. This is Chorismate synthase from Thermotoga maritima (strain ATCC 43589 / DSM 3109 / JCM 10099 / NBRC 100826 / MSB8).